Consider the following 1094-residue polypeptide: Protein transport protein Sec24C (1094 aa).

Residues 1–338 (MNVNQSVPPV…PIQVIEDDRN (338 aa)) form a disordered region. Over residues 8–19 (PPVPPFGQPQPI) the composition is skewed to pro residues. Composition is skewed to low complexity over residues 20-29 (YPGYHQSSYG) and 60-77 (SRAP…AQAP). Positions 90-101 (DVQNGPSSTVQM) are enriched in polar residues. The span at 123–132 (VLQPYGPPPT) shows a compositional bias: pro residues. 4 stretches are compositionally biased toward polar residues: residues 133–144 (SAQVATQLSGMQ), 165–175 (SLASASGSFPN), 189–215 (PLSQ…SFTP), and 240–251 (SVSQPNHVSSPP). Threonine 214 carries the post-translational modification Phosphothreonine. Over residues 273-282 (PQQPGYQPQQ) the composition is skewed to low complexity. Residues cysteine 425, cysteine 428, cysteine 447, and cysteine 450 each coordinate Zn(2+). The interval 425 to 450 (CNRCKAYMCPFMQFIEGGRRFQCCFC) is zinc finger-like. Residues 962–1034 (TTEPPAVRAS…DNPLSKKVRG (73 aa)) form a Gelsolin-like repeat.

This sequence belongs to the SEC23/SEC24 family. SEC24 subfamily. COPII is composed of at least five proteins: the Sec23/24 complex, the Sec13/31 complex and Sar1. Interacts with TMED2 and TMED10. Interacts with GOSR2 (via IxM motif) and STX5 (via IxM motif); recruits GOSR2 and STX5 into COPII-coated vesicles. Interacts with DDHD1. Interacts with STING1; promoting STING1 translocation to the COPII vesicles. Ubiquitous.

Its subcellular location is the cytoplasmic vesicle. The protein resides in the COPII-coated vesicle membrane. It localises to the endoplasmic reticulum membrane. It is found in the cytoplasm. The protein localises to the cytosol. Functionally, component of the coat protein complex II (COPII) which promotes the formation of transport vesicles from the endoplasmic reticulum (ER). The coat has two main functions, the physical deformation of the endoplasmic reticulum membrane into vesicles and the selection of cargo molecules for their transport to the Golgi complex. Plays a central role in cargo selection within the COPII complex and together with SEC24D may have a different specificity compared to SEC24A and SEC24B. May more specifically package GPI-anchored proteins through the cargo receptor TMED10. May also be specific for IxM motif-containing cargos like the SNAREs GOSR2 and STX5. In Homo sapiens (Human), this protein is Protein transport protein Sec24C.